The chain runs to 444 residues: Phosphoribosylamine--glycine ligase (444 aa).

An ATP-grasp domain is found at arginine 109–asparagine 324. Leucine 140–threonine 202 contributes to the ATP binding site. Mg(2+)-binding residues include glutamine 282, glutamate 294, and asparagine 296. Positions 282, 294, and 296 each coordinate Mn(2+).

This sequence belongs to the GARS family. Mg(2+) serves as cofactor. It depends on Mn(2+) as a cofactor.

The catalysed reaction is 5-phospho-beta-D-ribosylamine + glycine + ATP = N(1)-(5-phospho-beta-D-ribosyl)glycinamide + ADP + phosphate + H(+). It participates in purine metabolism; IMP biosynthesis via de novo pathway; N(1)-(5-phospho-D-ribosyl)glycinamide from 5-phospho-alpha-D-ribose 1-diphosphate: step 2/2. The chain is Phosphoribosylamine--glycine ligase from Methanocaldococcus jannaschii (strain ATCC 43067 / DSM 2661 / JAL-1 / JCM 10045 / NBRC 100440) (Methanococcus jannaschii).